The sequence spans 274 residues: 16S rRNA (guanine(1405)-N(7))-methyltransferase (274 aa).

S-adenosyl-L-methionine-binding positions include 102 to 108 (HISTRER), Ala-133, Asp-156, 182 to 183 (DL), Leu-198, and Gln-207.

It belongs to the methyltransferase superfamily. Aminoglycoside resistance family.

The catalysed reaction is guanosine(1405) in 16S rRNA + S-adenosyl-L-methionine = N(7)-methylguanosine(1405) in 16S rRNA + S-adenosyl-L-homocysteine. Functionally, specifically methylates the N(7) position of guanine 1405 in 16S rRNA. Confers resistance to various aminoglycosides, including gentamicin, kanamycin and sisomicin. The sequence is that of 16S rRNA (guanine(1405)-N(7))-methyltransferase (sgm) from Micromonospora zionensis.